We begin with the raw amino-acid sequence, 342 residues long: A-type ATP synthase subunit C (342 aa).

This sequence belongs to the V-ATPase V0D/AC39 subunit family. As to quaternary structure, has multiple subunits with at least A(3), B(3), C, D, E, F, H, I and proteolipid K(x).

The protein resides in the cell membrane. Its function is as follows. Component of the A-type ATP synthase that produces ATP from ADP in the presence of a proton gradient across the membrane. The sequence is that of A-type ATP synthase subunit C from Archaeoglobus fulgidus (strain ATCC 49558 / DSM 4304 / JCM 9628 / NBRC 100126 / VC-16).